The chain runs to 62 residues: Mu-conotoxin Lt5d (62 aa).

The first 22 residues, 1–22 (MRCLPVFIILLLLIPSAPSVDA), serve as a signal peptide directing secretion. Residues 23-48 (QPTTKDDVPLASLHDNAKRALQMFWN) constitute a propeptide that is removed on maturation.

The protein belongs to the conotoxin T superfamily. In terms of processing, contains 2 disulfide bonds that can be either 'C1-C3, C2-C4' or 'C1-C4, C2-C3', since these disulfide connectivities have been observed for conotoxins with cysteine framework V (for examples, see AC P0DQQ7 and AC P81755). As to expression, expressed by the venom duct.

The protein localises to the secreted. Functionally, mu-conotoxins block voltage-gated sodium channels (Nav). This toxin inhibits tetrodotoxin(TTX)-sensitive sodium channels, but does not affect TTX-resistant sodium channels. Reduces the amplitude of currents without changing the activation and inactivation kinetics of currents. The polypeptide is Mu-conotoxin Lt5d (Conus litteratus (Lettered cone)).